The sequence spans 148 residues: MKVIFLKDVKGKGKKGEVKNVPDGYANNFLLKQGLAAEATNSSMKTLEAQKRKEEKDAAAELENAKELKETLEKLTVELKAKSGEGGRLFGSITSKQIVDAMQKSHKIKLDKRKFEMDDAIRALGYTNVTVKLHPQVTATVKVHVSEQ.

The protein belongs to the bacterial ribosomal protein bL9 family.

Its function is as follows. Binds to the 23S rRNA. This chain is Large ribosomal subunit protein bL9, found in Bacillus cereus (strain B4264).